A 202-amino-acid polypeptide reads, in one-letter code: Probable chemoreceptor glutamine deamidase CheD (202 aa).

This sequence belongs to the CheD family.

It catalyses the reaction L-glutaminyl-[protein] + H2O = L-glutamyl-[protein] + NH4(+). Functionally, probably deamidates glutamine residues to glutamate on methyl-accepting chemotaxis receptors (MCPs), playing an important role in chemotaxis. In Thiobacillus denitrificans (strain ATCC 25259 / T1), this protein is Probable chemoreceptor glutamine deamidase CheD.